A 523-amino-acid chain; its full sequence is GMP synthase [glutamine-hydrolyzing] (523 aa).

The Glutamine amidotransferase type-1 domain maps to 8-205; it reads KILILDFGSQ…VVNICGCETK (198 aa). Catalysis depends on Cys-85, which acts as the Nucleophile. Active-site residues include His-179 and Glu-181. The 193-residue stretch at 206–398 folds into the GMPS ATP-PPase domain; it reads WTAENIIEDA…LGLPAEMINR (193 aa). 233 to 239 contacts ATP; sequence SGGVDSS.

As to quaternary structure, homodimer.

The enzyme catalyses XMP + L-glutamine + ATP + H2O = GMP + L-glutamate + AMP + diphosphate + 2 H(+). It participates in purine metabolism; GMP biosynthesis; GMP from XMP (L-Gln route): step 1/1. In terms of biological role, catalyzes the synthesis of GMP from XMP. The chain is GMP synthase [glutamine-hydrolyzing] from Haemophilus influenzae (strain PittEE).